A 143-amino-acid chain; its full sequence is Large ribosomal subunit protein uL11 (143 aa).

The protein belongs to the universal ribosomal protein uL11 family. In terms of assembly, part of the ribosomal stalk of the 50S ribosomal subunit. Interacts with L10 and the large rRNA to form the base of the stalk. L10 forms an elongated spine to which L12 dimers bind in a sequential fashion forming a multimeric L10(L12)X complex. In terms of processing, one or more lysine residues are methylated.

In terms of biological role, forms part of the ribosomal stalk which helps the ribosome interact with GTP-bound translation factors. This chain is Large ribosomal subunit protein uL11, found in Azotobacter vinelandii (strain DJ / ATCC BAA-1303).